A 312-amino-acid polypeptide reads, in one-letter code: Cytochrome f (312 aa).

The signal sequence occupies residues 1–30 (MYLSKNFFLNLKTFIFSFFVLCFFSQSAQA). Heme contacts are provided by Tyr-31, Cys-51, Cys-54, and His-55. The chain crosses the membrane as a helical span at residues 278 to 298 (VQGLLLFSLFILLAQIFLVLK).

This sequence belongs to the cytochrome f family. As to quaternary structure, the 4 large subunits of the cytochrome b6-f complex are cytochrome b6, subunit IV (17 kDa polypeptide, petD), cytochrome f and the Rieske protein, while the 4 small subunits are PetG, PetL, PetM and PetN. The complex functions as a dimer. The cofactor is heme.

The protein resides in the plastid. The protein localises to the chloroplast thylakoid membrane. Component of the cytochrome b6-f complex, which mediates electron transfer between photosystem II (PSII) and photosystem I (PSI), cyclic electron flow around PSI, and state transitions. This chain is Cytochrome f (petA), found in Bigelowiella natans (Pedinomonas minutissima).